A 91-amino-acid polypeptide reads, in one-letter code: Small membrane A-kinase anchor protein (91 aa).

The N-myristoyl glycine moiety is linked to residue G2.

The protein belongs to the small membrane AKAP family. May be palmitoylated at Cys-3.

Its subcellular location is the cell membrane. In terms of biological role, binds to type I regulatory subunits of protein kinase A and may anchor/target them to the plasma membrane. This Xenopus tropicalis (Western clawed frog) protein is Small membrane A-kinase anchor protein.